The following is a 64-amino-acid chain: MAFKIIASQCTQCGACEFECPSGAISFKTDRFVVDPKICTECRIEFDAPKCRAICPMPNTCVPA.

Positions 2 to 30 (AFKIIASQCTQCGACEFECPSGAISFKTD) constitute a 4Fe-4S ferredoxin-type domain. [4Fe-4S] cluster-binding residues include cysteine 10, cysteine 13, cysteine 16, cysteine 20, cysteine 39, cysteine 42, cysteine 51, and cysteine 55.

It depends on [4Fe-4S] cluster as a cofactor.

This Rhizobium leguminosarum bv. trifolii protein is Ferredoxin-like protein in nif region (fdxN).